The sequence spans 544 residues: Probable protein kinase UbiB (544 aa).

A Protein kinase domain is found at 123 to 505; the sequence is EFDEQALASA…GRQKSHNVRS (383 aa). ATP is bound by residues 129–137 and K156; that span reads LASASIAQV. Catalysis depends on D291, which acts as the Proton acceptor. The chain crosses the membrane as a helical span at residues 522–540; that stretch reads LPLWLSCGTLVTVLLVLLL.

Belongs to the ABC1 family. UbiB subfamily.

It is found in the cell inner membrane. Its pathway is cofactor biosynthesis; ubiquinone biosynthesis [regulation]. Is probably a protein kinase regulator of UbiI activity which is involved in aerobic coenzyme Q (ubiquinone) biosynthesis. The sequence is that of Probable protein kinase UbiB from Actinobacillus pleuropneumoniae serotype 5b (strain L20).